Here is a 246-residue protein sequence, read N- to C-terminus: Osmotin-like protein TPM-1 (246 aa).

A signal peptide spans 1–21; it reads MAYLRSSFVFFLLAFVTYTYA. 8 disulfides stabilise this stretch: Cys30–Cys225, Cys72–Cys82, Cys87–Cys93, Cys141–Cys213, Cys146–Cys196, Cys154–Cys164, Cys168–Cys177, and Cys178–Cys183.

This sequence belongs to the thaumatin family.

The protein resides in the vacuole. It carries out the reaction Endohydrolysis of (1-&gt;3)- or (1-&gt;4)-linkages in beta-D-glucans when the glucose residue whose reducing group is involved in the linkage to be hydrolyzed is itself substituted at C-3.. Antifungal protein that inhibits the growth of several phytopathogenic fungi (e.g. Trichothecium roseum, Fusarium oxysporum, Phytophthora citrophthora and Colletotrichum coccodes). May bind to beta-glucans and have beta-1,3-D-glucanase activity. The sequence is that of Osmotin-like protein TPM-1 from Solanum lycopersicum (Tomato).